We begin with the raw amino-acid sequence, 420 residues long: ATP phosphoribosyltransferase regulatory subunit (420 aa).

It belongs to the class-II aminoacyl-tRNA synthetase family. HisZ subfamily. Heteromultimer composed of HisG and HisZ subunits.

The protein resides in the cytoplasm. It functions in the pathway amino-acid biosynthesis; L-histidine biosynthesis; L-histidine from 5-phospho-alpha-D-ribose 1-diphosphate: step 1/9. Required for the first step of histidine biosynthesis. May allow the feedback regulation of ATP phosphoribosyltransferase activity by histidine. The sequence is that of ATP phosphoribosyltransferase regulatory subunit from Bacillus thuringiensis subsp. konkukian (strain 97-27).